The chain runs to 883 residues: Glutamate receptor 2 (883 aa).

Residues 1-21 (MQKIMHISVLLSPVLWGLIFG) form the signal peptide. Topologically, residues 22–543 (VSSNSIQIGG…GVFSFLDPLA (522 aa)) are extracellular. A disulfide bridge connects residues cysteine 78 and cysteine 330. 4 N-linked (GlcNAc...) asparagine glycosylation sites follow: asparagine 256, asparagine 370, asparagine 406, and asparagine 413. L-glutamate contacts are provided by proline 499, threonine 501, and arginine 506. The helical transmembrane segment at 544 to 564 (YEIWMCIVFAYIGVSVVLFLV) threads the bilayer. Residues 565-591 (SRFSPYEWHTEEFEDGRETQSSESTNE) lie on the Cytoplasmic side of the membrane. Residues 592–607 (FGIFNSLWFSLGAFMQ) constitute an intramembrane region (helical; Pore-forming). An intramembrane segment occupies 608–610 (QGC). Cysteine 610 is lipidated: S-palmitoyl cysteine. Topologically, residues 611 to 616 (DISPRS) are cytoplasmic. The chain crosses the membrane as a helical span at residues 617-637 (LSGRIVGGVWWFFTLIIISSY). Over 638–812 (TANLAAFLTV…EKTSALSLSN (175 aa)) the chain is Extracellular. 2 residues coordinate L-glutamate: serine 675 and threonine 676. Serine 683 is subject to Phosphoserine; by PKC. At serine 717 the chain carries Phosphoserine; by PKG. Glutamate 726 contacts L-glutamate. Cysteines 739 and 794 form a disulfide. The helical transmembrane segment at 813 to 833 (VAGVFYILVGGLGLAMLVALI) threads the bilayer. The Cytoplasmic segment spans residues 834–883 (EFCYKSRAEAKRMKVAKNPQNINPSSSQNSQNFATYKEGYNVYGIESVKI). Cysteine 836 carries the S-palmitoyl cysteine lipid modification. Phosphoserine occurs at positions 860 and 863. The required for interaction with IQSEC1 stretch occupies residues 867 to 877 (ATYKEGYNVYG). A Phosphotyrosine modification is found at tyrosine 876. Residue serine 880 is modified to Phosphoserine.

The protein belongs to the glutamate-gated ion channel (TC 1.A.10.1) family. GRIA2 subfamily. Homotetramer or heterotetramer of pore-forming glutamate receptor subunits. Tetramers may be formed by the dimerization of dimers. May interact with MPP4. Forms a ternary complex with GRIP1 and CSPG4. Interacts with ATAD1 in an ATP-dependent manner. ATAD1-catalyzed ATP hydrolysis disrupts binding to ATAD1 and to GRIP1 and leads to AMPAR complex disassembly. Interacts with GRIP2. Interacts with GRIP1. Interacts with NSF via its C-terminus. Interacts with CACNG2, PICK1 and GRIP2. Interacts with GRIA1 and SYNDIG1. Part of a complex containing GRIA2, NSF and NAPA and/or NAPB. Interacts with SNX27 (via PDZ domain); the interaction is required for recycling to the plasma membrane when endocytosed and prevent degradation in lysosomes. Interacts with LRFN1. Found in a complex with GRIA1, GRIA3, GRIA4, CNIH2, CNIH3, CACNG2, CACNG3, CACNG4, CACNG5, CACNG7 and CACNG8. Interacts with CACNG5. Interacts with OLFM2. Interacts with AP4B1, AP4E1 and AP4M1; probably indirect it mediates the somatodendritic localization of GRIA2 in neurons. Forms a complex with GRIP1, NSG1 and STX12; controls the intracellular fate of AMPAR and the endosomal sorting of the GRIA2 subunit toward recycling and membrane targeting. Interacts with IQSEC1; the interaction is required for ARF6 activation. Interacts (heterotetramer form) with CNIH2 and CNIH3; this interaction promotes expression at the plasma membrane and extensively modulates their gating properties by slowing deactivation and desensitization kinetics. In terms of processing, palmitoylated. Depalmitoylated upon L-glutamate stimulation. Cys-610 palmitoylation leads to Golgi retention and decreased cell surface expression. In contrast, Cys-836 palmitoylation does not affect cell surface expression but regulates stimulation-dependent endocytosis. Post-translationally, phosphorylation at Tyr-876 is required for interaction with IQSEC1 and ARF6 activation, which in turn triggers AMPAR internalization for persistent synaptic depression. Ubiquitinated by RNF167, leading to its degradation. In terms of processing, N-glycosylated. As to expression, detected in forebrain. Detected in dendrites of neuronal cells. Expressed in the pyramidal cell layers of CA1 and CA3 and in the granule cell layer of the dentate gyrus.

Its subcellular location is the cell membrane. It localises to the postsynaptic cell membrane. It is found in the postsynaptic density membrane. The enzyme catalyses Ca(2+)(in) = Ca(2+)(out). It carries out the reaction Na(+)(in) = Na(+)(out). Ionotropic glutamate receptor that functions as a ligand-gated cation channel, gated by L-glutamate and glutamatergic agonists such as alpha-amino-3-hydroxy-5-methyl-4-isoxazolepropionic acid (AMPA), quisqualic acid, and kainic acid. L-glutamate acts as an excitatory neurotransmitter at many synapses in the central nervous system and plays an important role in fast excitatory synaptic transmission. Binding of the excitatory neurotransmitter L-glutamate induces a conformation change, leading to the opening of the cation channel, and thereby converts the chemical signal to an electrical impulse upon entry of monovalent and divalent cations such as sodium and calcium. The receptor then desensitizes rapidly and enters in a transient inactive state, characterized by the presence of bound agonist. In the presence of CACNG4 or CACNG7 or CACNG8, shows resensitization which is characterized by a delayed accumulation of current flux upon continued application of L-glutamate. Through complex formation with NSG1, GRIP1 and STX12 controls the intracellular fate of AMPAR and the endosomal sorting of the GRIA2 subunit toward recycling and membrane targeting. In Rattus norvegicus (Rat), this protein is Glutamate receptor 2.